The chain runs to 439 residues: Secreted RxLR effector protein 117 (439 aa).

A signal peptide spans 1-21 (MRGAYYVLAALLVVASSQIAA). The RxLR-dEER signature appears at 48–65 (RYLRGGHDVHDDSANEER).

The protein belongs to the RxLR effector family.

It localises to the secreted. The protein localises to the host nucleus. Its function is as follows. Secreted effector that acts as an elicitor that induces cell death in host plant cells. The chain is Secreted RxLR effector protein 117 from Plasmopara viticola (Downy mildew of grapevine).